Reading from the N-terminus, the 207-residue chain is Thiamine-phosphate synthase (207 aa).

4-amino-2-methyl-5-(diphosphooxymethyl)pyrimidine is bound by residues 37-41 and N69; that span reads QLREK. The Mg(2+) site is built by D70 and D89. A 4-amino-2-methyl-5-(diphosphooxymethyl)pyrimidine-binding site is contributed by S108. 134 to 136 is a 2-[(2R,5Z)-2-carboxy-4-methylthiazol-5(2H)-ylidene]ethyl phosphate binding site; sequence TGS. K137 provides a ligand contact to 4-amino-2-methyl-5-(diphosphooxymethyl)pyrimidine. Residues G165 and 185–186 contribute to the 2-[(2R,5Z)-2-carboxy-4-methylthiazol-5(2H)-ylidene]ethyl phosphate site; that span reads IS.

Belongs to the thiamine-phosphate synthase family. Mg(2+) serves as cofactor.

The catalysed reaction is 2-[(2R,5Z)-2-carboxy-4-methylthiazol-5(2H)-ylidene]ethyl phosphate + 4-amino-2-methyl-5-(diphosphooxymethyl)pyrimidine + 2 H(+) = thiamine phosphate + CO2 + diphosphate. It carries out the reaction 2-(2-carboxy-4-methylthiazol-5-yl)ethyl phosphate + 4-amino-2-methyl-5-(diphosphooxymethyl)pyrimidine + 2 H(+) = thiamine phosphate + CO2 + diphosphate. The enzyme catalyses 4-methyl-5-(2-phosphooxyethyl)-thiazole + 4-amino-2-methyl-5-(diphosphooxymethyl)pyrimidine + H(+) = thiamine phosphate + diphosphate. Its pathway is cofactor biosynthesis; thiamine diphosphate biosynthesis; thiamine phosphate from 4-amino-2-methyl-5-diphosphomethylpyrimidine and 4-methyl-5-(2-phosphoethyl)-thiazole: step 1/1. Condenses 4-methyl-5-(beta-hydroxyethyl)thiazole monophosphate (THZ-P) and 2-methyl-4-amino-5-hydroxymethyl pyrimidine pyrophosphate (HMP-PP) to form thiamine monophosphate (TMP). In Desulfitobacterium hafniense (strain DSM 10664 / DCB-2), this protein is Thiamine-phosphate synthase.